A 617-amino-acid chain; its full sequence is Protein fem-1 homolog C (617 aa).

An N-acetylmethionine modification is found at methionine 1. ANK repeat units follow at residues 2 to 31 (DLKT…KEEV), 40 to 70 (NGAT…SIEV), 82 to 111 (EGAP…SVNN), 115 to 144 (TNST…DLEV), 148 to 177 (HGHT…DVNR), 181 to 210 (KGNT…KMEK), and 213 to 242 (YGMT…TSKT). 2 TPR repeats span residues 245–279 (INAL…RYSD) and 338–371 (SYYI…QQNN). ANK repeat units follow at residues 481–523 (NNFS…DVNV) and 527–556 (DDNS…HFDA).

This sequence belongs to the fem-1 family. In terms of assembly, component of a CRL2 E3 ubiquitin-protein ligase complex, also named ECS (Elongin BC-CUL2/5-SOCS-box protein) complex, composed of CUL2, Elongin BC (ELOB and ELOC), RBX1 and substrate-specific adapter FEM1C.

It functions in the pathway protein modification; protein ubiquitination. Its function is as follows. Substrate-recognition component of a Cul2-RING (CRL2) E3 ubiquitin-protein ligase complex of the DesCEND (destruction via C-end degrons) pathway, which recognizes a C-degron located at the extreme C terminus of target proteins, leading to their ubiquitination and degradation. The C-degron recognized by the DesCEND pathway is usually a motif of less than ten residues and can be present in full-length proteins, truncated proteins or proteolytically cleaved forms. The CRL2(FEM1C) complex specifically recognizes proteins with an arginine at the C-terminus: recognizes and binds proteins ending with -Lys/Arg-Xaa-Arg and -Lys/Arg-Xaa-Xaa-Arg C-degrons, such as SIL1 or OR51B2, leading to their ubiquitination and degradation. The CRL2(FEM1C) complex mediates ubiquitination and degradation of truncated MSRB1/SEPX1 selenoproteins produced by failed UGA/Sec decoding. The polypeptide is Protein fem-1 homolog C (Bos taurus (Bovine)).